Here is a 122-residue protein sequence, read N- to C-terminus: Large ribosomal subunit protein uL18 (122 aa).

This sequence belongs to the universal ribosomal protein uL18 family. Part of the 50S ribosomal subunit; part of the 5S rRNA/L5/L18/L25 subcomplex. Contacts the 5S and 23S rRNAs.

This is one of the proteins that bind and probably mediate the attachment of the 5S RNA into the large ribosomal subunit, where it forms part of the central protuberance. This Heliobacterium modesticaldum (strain ATCC 51547 / Ice1) protein is Large ribosomal subunit protein uL18.